Consider the following 502-residue polypeptide: Probable cytochrome P450 514A4 (502 aa).

A helical transmembrane segment spans residues 4 to 24 (IFTIILTITILVLSLILKDLL). Cys448 provides a ligand contact to heme.

This sequence belongs to the cytochrome P450 family. The cofactor is heme.

Its subcellular location is the membrane. The polypeptide is Probable cytochrome P450 514A4 (cyp514A4) (Dictyostelium discoideum (Social amoeba)).